The sequence spans 334 residues: Glyceraldehyde-3-phosphate dehydrogenase 1 (334 aa).

NAD(+) contacts are provided by residues 11–12 (RI), Asp33, Arg77, and Ser119. Residues 150–152 (SCT) and Thr181 each bind D-glyceraldehyde 3-phosphate. The Nucleophile role is filled by Cys151. Asn182 is an NAD(+) binding site. D-glyceraldehyde 3-phosphate is bound by residues Arg196, 209-210 (TG), and Arg232. Residue Asn314 coordinates NAD(+).

The protein belongs to the glyceraldehyde-3-phosphate dehydrogenase family. Homotetramer.

It is found in the cytoplasm. It catalyses the reaction D-glyceraldehyde 3-phosphate + phosphate + NAD(+) = (2R)-3-phospho-glyceroyl phosphate + NADH + H(+). The protein operates within carbohydrate degradation; glycolysis; pyruvate from D-glyceraldehyde 3-phosphate: step 1/5. Catalyzes the oxidative phosphorylation of glyceraldehyde 3-phosphate (G3P) to 1,3-bisphosphoglycerate (BPG) using the cofactor NAD. The first reaction step involves the formation of a hemiacetal intermediate between G3P and a cysteine residue, and this hemiacetal intermediate is then oxidized to a thioester, with concomitant reduction of NAD to NADH. The reduced NADH is then exchanged with the second NAD, and the thioester is attacked by a nucleophilic inorganic phosphate to produce BPG. The protein is Glyceraldehyde-3-phosphate dehydrogenase 1 (gap1) of Bacillus cereus.